The chain runs to 147 residues: Arginine vasopressin-induced protein 1 (147 aa).

Disordered regions lie at residues 1-24 (MGTPASVVSEPPPWQAPIEARGRK) and 104-147 (LANP…QIRH). Positions 105 to 119 (ANPQSATETASSEQY) are enriched in polar residues. Positions 121–134 (HSRKKSARIRRNWR) are enriched in basic residues. Residues 137-147 (GPTSYLHQIRH) are compositionally biased toward polar residues.

May be involved in MAP kinase activation, epithelial sodium channel (ENaC) down-regulation and cell cycling. This Homo sapiens (Human) protein is Arginine vasopressin-induced protein 1 (AVPI1).